A 109-amino-acid chain; its full sequence is Large ribosomal subunit protein uL23 (109 aa).

It belongs to the universal ribosomal protein uL23 family. As to quaternary structure, part of the 50S ribosomal subunit. Contacts protein L29, and trigger factor when it is bound to the ribosome.

Its function is as follows. One of the early assembly proteins it binds 23S rRNA. One of the proteins that surrounds the polypeptide exit tunnel on the outside of the ribosome. Forms the main docking site for trigger factor binding to the ribosome. The polypeptide is Large ribosomal subunit protein uL23 (Haemophilus influenzae (strain PittEE)).